A 202-amino-acid polypeptide reads, in one-letter code: Small ribosomal subunit protein uS4 (202 aa).

Over residues 1–13 the composition is skewed to basic residues; that stretch reads MSRYRGPRLRITR. The segment at 1-43 is disordered; the sequence is MSRYRGPRLRITRRLGDLPGLTRKAAKRSHPPGQHGQARRKRS. The S4 RNA-binding domain maps to 90–152; that stretch reads NRLDNVCFRL…KGSKKLAEAN (63 aa).

This sequence belongs to the universal ribosomal protein uS4 family. As to quaternary structure, part of the 30S ribosomal subunit. Contacts protein S5. The interaction surface between S4 and S5 is involved in control of translational fidelity.

Its function is as follows. One of the primary rRNA binding proteins, it binds directly to 16S rRNA where it nucleates assembly of the body of the 30S subunit. With S5 and S12 plays an important role in translational accuracy. In Prochlorococcus marinus (strain MIT 9303), this protein is Small ribosomal subunit protein uS4.